The chain runs to 482 residues: tRNA sulfurtransferase (482 aa).

A THUMP domain is found at 61 to 165; the sequence is AQYLETLACI…NDELYIISAV (105 aa). ATP is bound by residues 183 to 184, Lys-265, Gly-287, and Gln-296; that span reads LL. The cysteines at positions 344 and 456 are disulfide-linked. One can recognise a Rhodanese domain in the interval 404–482; that stretch reads LAADEVILDI…GFDNVKVYRP (79 aa). Cys-456 (cysteine persulfide intermediate) is an active-site residue.

It belongs to the ThiI family.

It is found in the cytoplasm. It carries out the reaction [ThiI sulfur-carrier protein]-S-sulfanyl-L-cysteine + a uridine in tRNA + 2 reduced [2Fe-2S]-[ferredoxin] + ATP + H(+) = [ThiI sulfur-carrier protein]-L-cysteine + a 4-thiouridine in tRNA + 2 oxidized [2Fe-2S]-[ferredoxin] + AMP + diphosphate. It catalyses the reaction [ThiS sulfur-carrier protein]-C-terminal Gly-Gly-AMP + S-sulfanyl-L-cysteinyl-[cysteine desulfurase] + AH2 = [ThiS sulfur-carrier protein]-C-terminal-Gly-aminoethanethioate + L-cysteinyl-[cysteine desulfurase] + A + AMP + 2 H(+). The protein operates within cofactor biosynthesis; thiamine diphosphate biosynthesis. Its function is as follows. Catalyzes the ATP-dependent transfer of a sulfur to tRNA to produce 4-thiouridine in position 8 of tRNAs, which functions as a near-UV photosensor. Also catalyzes the transfer of sulfur to the sulfur carrier protein ThiS, forming ThiS-thiocarboxylate. This is a step in the synthesis of thiazole, in the thiamine biosynthesis pathway. The sulfur is donated as persulfide by IscS. The chain is tRNA sulfurtransferase from Aeromonas salmonicida (strain A449).